The primary structure comprises 432 residues: Adenylosuccinate synthetase (432 aa).

GTP-binding positions include 13–19 (GDEGKGK) and 41–43 (GHT). The Proton acceptor role is filled by Asp-14. Asp-14 and Gly-41 together coordinate Mg(2+). Residues 14–17 (DEGK), 39–42 (NAGH), Thr-130, Arg-144, Gln-225, Thr-240, and Arg-304 contribute to the IMP site. Catalysis depends on His-42, which acts as the Proton donor. 300-306 (ATTGRSR) contacts substrate. GTP-binding positions include Arg-306, 332–334 (KLD), and 415–417 (STG).

The protein belongs to the adenylosuccinate synthetase family. Homodimer. Mg(2+) serves as cofactor.

Its subcellular location is the cytoplasm. The enzyme catalyses IMP + L-aspartate + GTP = N(6)-(1,2-dicarboxyethyl)-AMP + GDP + phosphate + 2 H(+). The protein operates within purine metabolism; AMP biosynthesis via de novo pathway; AMP from IMP: step 1/2. Functionally, plays an important role in the de novo pathway of purine nucleotide biosynthesis. Catalyzes the first committed step in the biosynthesis of AMP from IMP. This is Adenylosuccinate synthetase from Yersinia pseudotuberculosis serotype O:1b (strain IP 31758).